A 178-amino-acid chain; its full sequence is PEST proteolytic signal-containing nuclear protein (178 aa).

Positions 1–15 are enriched in basic and acidic residues; sequence MADGKAGEEKPEKPQ. The interval 1 to 82 is disordered; the sequence is MADGKAGEEK…FAIGSQTARK (82 aa). A2 bears the N-acetylalanine mark. Low complexity predominate over residues 37-47; the sequence is SSSNGGESSSR. S53 is subject to Phosphoserine. K64 bears the N6-acetyllysine mark. 3 positions are modified to phosphoserine: S77, S87, and S119. The segment at 134–158 is disordered; the sequence is NIGRDTPTSAGPNSFNKGKHGFSDN. A Phosphothreonine modification is found at T139. The segment covering 139–149 has biased composition (polar residues); sequence TPTSAGPNSFN. Phosphoserine is present on S147. An N6-acetyllysine mark is found at K150 and K152.

As to quaternary structure, interacts with UHRF2/NIRF. Post-translationally, ubiquitinated; mediated by UHRF2 and leading to its subsequent proteasomal degradation. In terms of processing, N-terminally acetylated in a HYPK-dependent manner by the NatA acetyltransferase complex which is composed of NAA10 and NAA15.

The protein resides in the nucleus. Functionally, may be involved in cell cycle regulation. The sequence is that of PEST proteolytic signal-containing nuclear protein (Pcnp) from Mus musculus (Mouse).